A 353-amino-acid polypeptide reads, in one-letter code: Phospho-N-acetylmuramoyl-pentapeptide-transferase (353 aa).

Transmembrane regions (helical) follow at residues 24 to 44, 66 to 86, 88 to 108, 129 to 149, 160 to 180, 192 to 212, 229 to 249, 256 to 276, 281 to 301, and 330 to 350; these read LGFF…ILWA, TPTM…VLCA, LGNL…FVGF, FGML…KGLD, PLFE…FLST, GLAS…VYVA, VGEL…FLWY, VFMG…NAIV, ILLV…ILQV, and KVIV…LLSL.

It belongs to the glycosyltransferase 4 family. MraY subfamily. The cofactor is Mg(2+).

The protein resides in the cell inner membrane. The enzyme catalyses UDP-N-acetyl-alpha-D-muramoyl-L-alanyl-gamma-D-glutamyl-meso-2,6-diaminopimeloyl-D-alanyl-D-alanine + di-trans,octa-cis-undecaprenyl phosphate = di-trans,octa-cis-undecaprenyl diphospho-N-acetyl-alpha-D-muramoyl-L-alanyl-D-glutamyl-meso-2,6-diaminopimeloyl-D-alanyl-D-alanine + UMP. The protein operates within cell wall biogenesis; peptidoglycan biosynthesis. In terms of biological role, catalyzes the initial step of the lipid cycle reactions in the biosynthesis of the cell wall peptidoglycan: transfers peptidoglycan precursor phospho-MurNAc-pentapeptide from UDP-MurNAc-pentapeptide onto the lipid carrier undecaprenyl phosphate, yielding undecaprenyl-pyrophosphoryl-MurNAc-pentapeptide, known as lipid I. The chain is Phospho-N-acetylmuramoyl-pentapeptide-transferase from Helicobacter pylori (strain ATCC 700392 / 26695) (Campylobacter pylori).